The sequence spans 583 residues: Asparagine synthetase, root [glutamine-hydrolyzing] (583 aa).

Cysteine 2 serves as the catalytic For GATase activity. A Glutamine amidotransferase type-2 domain is found at 2–185 (CGILAVLGCS…PGHLYSSKDS (184 aa)). L-glutamine contacts are provided by residues 50–54 (RLAIV), 75–77 (NGE), and aspartate 98. Residues leucine 231, valine 267, and 341 to 342 (SG) contribute to the ATP site. The 280-residue stretch at 237–516 (DSSLVASITS…PQNSARLTVP (280 aa)) folds into the Asparagine synthetase domain.

As to expression, roots.

It carries out the reaction L-aspartate + L-glutamine + ATP + H2O = L-asparagine + L-glutamate + AMP + diphosphate + H(+). It participates in amino-acid biosynthesis; L-asparagine biosynthesis; L-asparagine from L-aspartate (L-Gln route): step 1/1. This is Asparagine synthetase, root [glutamine-hydrolyzing] (AS2) from Pisum sativum (Garden pea).